The chain runs to 186 residues: Glutathione peroxidase 7 (186 aa).

The N-terminal stretch at 1–18 is a signal peptide; that stretch reads MVAARAAAWLLLAAAACA. C56 is an active-site residue.

Belongs to the glutathione peroxidase family.

The protein localises to the secreted. It catalyses the reaction 2 glutathione + H2O2 = glutathione disulfide + 2 H2O. This is Glutathione peroxidase 7 (GPX7) from Bos taurus (Bovine).